Reading from the N-terminus, the 457-residue chain is Phosphoglucosamine mutase (457 aa).

Ser105 (phosphoserine intermediate) is an active-site residue. 4 residues coordinate Mg(2+): Ser105, Asp247, Asp249, and Asp251. Ser105 is subject to Phosphoserine.

Belongs to the phosphohexose mutase family. The cofactor is Mg(2+). In terms of processing, activated by phosphorylation.

It carries out the reaction alpha-D-glucosamine 1-phosphate = D-glucosamine 6-phosphate. Catalyzes the conversion of glucosamine-6-phosphate to glucosamine-1-phosphate. In Protochlamydia amoebophila (strain UWE25), this protein is Phosphoglucosamine mutase.